A 219-amino-acid polypeptide reads, in one-letter code: Small ribosomal subunit protein uS19 (219 aa).

The unknown stretch occupies residues 1–128; the sequence is MGFKGAWNKR…YEEIYAQYKQ (128 aa). The small ribosomal subunit protein uS19 stretch occupies residues 129–219; the sequence is MTEKKAYVDP…DKTAKVVKKK (91 aa).

It belongs to the universal ribosomal protein uS19 family.

Protein S19 forms a complex with S13 that binds strongly to the 16S ribosomal RNA. The polypeptide is Small ribosomal subunit protein uS19 (Aquifex pyrophilus).